The sequence spans 459 residues: tRNA modification GTPase MnmE (459 aa).

(6S)-5-formyl-5,6,7,8-tetrahydrofolate is bound by residues Arg-23, Glu-88, and Arg-127. Residues 223–381 (GLNTVIIGKP…LKDTIENMFA (159 aa)) enclose the TrmE-type G domain. Residue Asn-233 participates in K(+) binding. Residues 233–238 (NVGKSS), 252–258 (TDIPGTT), and 277–280 (DTAG) contribute to the GTP site. Ser-237 provides a ligand contact to Mg(2+). Thr-252, Ile-254, and Thr-257 together coordinate K(+). Residue Thr-258 participates in Mg(2+) binding. Lys-459 lines the (6S)-5-formyl-5,6,7,8-tetrahydrofolate pocket.

The protein belongs to the TRAFAC class TrmE-Era-EngA-EngB-Septin-like GTPase superfamily. TrmE GTPase family. In terms of assembly, homodimer. Heterotetramer of two MnmE and two MnmG subunits. Requires K(+) as cofactor.

The protein localises to the cytoplasm. In terms of biological role, exhibits a very high intrinsic GTPase hydrolysis rate. Involved in the addition of a carboxymethylaminomethyl (cmnm) group at the wobble position (U34) of certain tRNAs, forming tRNA-cmnm(5)s(2)U34. The protein is tRNA modification GTPase MnmE of Clostridium acetobutylicum (strain ATCC 824 / DSM 792 / JCM 1419 / IAM 19013 / LMG 5710 / NBRC 13948 / NRRL B-527 / VKM B-1787 / 2291 / W).